The following is a 389-amino-acid chain: Flap endonuclease 1 (389 aa).

An N-domain region spans residues 1 to 105; the sequence is MGIKGLTALL…GELAKRKDKR (105 aa). Residue Asp-34 coordinates Mg(2+). Arg-71 serves as a coordination point for DNA. Mg(2+)-binding residues include Asp-87, Glu-159, Glu-161, Asp-180, and Asp-182. The interval 123–254 is I-domain; sequence EVEKLSKRTV…KTALKLIKEH (132 aa). Residue Glu-159 coordinates DNA. Gly-232 and Asp-234 together coordinate DNA. Residue Asp-234 coordinates Mg(2+). Residues 338–346 are interaction with PCNA; that stretch reads SQNRLESFF. The tract at residues 356–389 is disordered; that stretch reads IGKRKVEETKSGKGSKAGLNKKSKGVSGYKSKKT. Positions 374-389 are enriched in basic residues; that stretch reads LNKKSKGVSGYKSKKT.

This sequence belongs to the XPG/RAD2 endonuclease family. FEN1 subfamily. In terms of assembly, interacts with PCNA. Three molecules of FEN1 bind to one PCNA trimer with each molecule binding to one PCNA monomer. PCNA stimulates the nuclease activity without altering cleavage specificity. It depends on Mg(2+) as a cofactor. Post-translationally, phosphorylated. Phosphorylation upon DNA damage induces relocalization to the nuclear plasma.

It is found in the nucleus. The protein localises to the nucleolus. Its subcellular location is the nucleoplasm. The protein resides in the mitochondrion. Structure-specific nuclease with 5'-flap endonuclease and 5'-3' exonuclease activities involved in DNA replication and repair. During DNA replication, cleaves the 5'-overhanging flap structure that is generated by displacement synthesis when DNA polymerase encounters the 5'-end of a downstream Okazaki fragment. It enters the flap from the 5'-end and then tracks to cleave the flap base, leaving a nick for ligation. Also involved in the long patch base excision repair (LP-BER) pathway, by cleaving within the apurinic/apyrimidinic (AP) site-terminated flap. Acts as a genome stabilization factor that prevents flaps from equilibrating into structures that lead to duplications and deletions. Also possesses 5'-3' exonuclease activity on nicked or gapped double-stranded DNA, and exhibits RNase H activity. Also involved in replication and repair of rDNA and in repairing mitochondrial DNA. This Ostreococcus tauri protein is Flap endonuclease 1.